Here is a 268-residue protein sequence, read N- to C-terminus: Glutamine amidotransferase-like class 1 domain-containing protein 3, mitochondrial (268 aa).

The N-terminal 41 residues, 1–41 (MAAVRVLVASRLAAASAFTSLSPGGRTPSQRAALHLSVPRP), are a transit peptide targeting the mitochondrion. Residues K151, K157, and K164 each carry the N6-acetyllysine modification. An N6-acetyllysine; alternate modification is found at K203. K203 is modified (N6-succinyllysine; alternate). An N6-acetyllysine modification is found at K219. K223 and K233 each carry N6-acetyllysine; alternate. 2 positions are modified to N6-succinyllysine; alternate: K223 and K233.

Belongs to the GATD3 family.

It localises to the mitochondrion. In Homo sapiens (Human), this protein is Glutamine amidotransferase-like class 1 domain-containing protein 3, mitochondrial.